The primary structure comprises 269 residues: Protein OPG079 (269 aa).

The protein belongs to the orthopoxvirus OPG079 family. As to quaternary structure, homoomultimer (Potential). Interacts with the small subunit of ribonucleotide reductase.

It localises to the host cytoplasm. Functionally, plays an essential role in viral DNA replication. Binds to ssDNA with high affinity and localizes to cytoplasmic factories where nascent viral genomes accumulate. May disrupt loops, hairpins and other secondary structures present on ssDNA to reduce and eliminate pausing of viral DNA polymerase at specific sites during elongation. The chain is Protein OPG079 (OPG079) from Cynomys gunnisoni (Gunnison's prairie dog).